The sequence spans 142 residues: MKYYSNPSFGGMDKNCKMSPRQVTIKAKELWLVNSTMTIAKKNLKKMEKVYDYLNQINIKTLSPESVIYYELWFMFIVECIHIQKIIIEYFQHEKNGEKQPITIGEIVYKIKMMLKPISVPFLKVKTGHVKLFIPEQIFNKF.

It belongs to the IIV-3 015R family.

This is an uncharacterized protein from Aedes vexans (Inland floodwater mosquito).